The sequence spans 1465 residues: DNA polymerase III PolC-type (1465 aa).

Positions 425–581 (YVVFDVETTG…YDAEATGRLL (157 aa)) constitute an Exonuclease domain.

Belongs to the DNA polymerase type-C family. PolC subfamily.

It is found in the cytoplasm. It carries out the reaction DNA(n) + a 2'-deoxyribonucleoside 5'-triphosphate = DNA(n+1) + diphosphate. Its function is as follows. Required for replicative DNA synthesis. This DNA polymerase also exhibits 3' to 5' exonuclease activity. This Streptococcus mutans serotype c (strain ATCC 700610 / UA159) protein is DNA polymerase III PolC-type.